Reading from the N-terminus, the 361-residue chain is UDP-N-acetylglucosamine--N-acetylmuramyl-(pentapeptide) pyrophosphoryl-undecaprenol N-acetylglucosamine transferase (361 aa).

UDP-N-acetyl-alpha-D-glucosamine-binding positions include 12–14 (TGG), asparagine 126, arginine 167, serine 192, isoleucine 247, and glutamine 292.

This sequence belongs to the glycosyltransferase 28 family. MurG subfamily.

Its subcellular location is the cell inner membrane. It carries out the reaction di-trans,octa-cis-undecaprenyl diphospho-N-acetyl-alpha-D-muramoyl-L-alanyl-D-glutamyl-meso-2,6-diaminopimeloyl-D-alanyl-D-alanine + UDP-N-acetyl-alpha-D-glucosamine = di-trans,octa-cis-undecaprenyl diphospho-[N-acetyl-alpha-D-glucosaminyl-(1-&gt;4)]-N-acetyl-alpha-D-muramoyl-L-alanyl-D-glutamyl-meso-2,6-diaminopimeloyl-D-alanyl-D-alanine + UDP + H(+). It functions in the pathway cell wall biogenesis; peptidoglycan biosynthesis. Cell wall formation. Catalyzes the transfer of a GlcNAc subunit on undecaprenyl-pyrophosphoryl-MurNAc-pentapeptide (lipid intermediate I) to form undecaprenyl-pyrophosphoryl-MurNAc-(pentapeptide)GlcNAc (lipid intermediate II). This is UDP-N-acetylglucosamine--N-acetylmuramyl-(pentapeptide) pyrophosphoryl-undecaprenol N-acetylglucosamine transferase from Syntrophus aciditrophicus (strain SB).